The sequence spans 98 residues: Small ribosomal subunit protein bS20 (98 aa).

It belongs to the bacterial ribosomal protein bS20 family.

Binds directly to 16S ribosomal RNA. This chain is Small ribosomal subunit protein bS20, found in Parasynechococcus marenigrum (strain WH8102).